A 162-amino-acid polypeptide reads, in one-letter code: uncharacterized protein (162 aa).

3 helical membrane passes run 28-50 (ALAL…VCFF), 57-76 (LLLL…DPWL), and 108-130 (YNTM…YALA).

It is found in the cell membrane. This is an uncharacterized protein from Treponema pallidum (strain Nichols).